A 256-amino-acid polypeptide reads, in one-letter code: MAALELDLFLCRTDNYGVLLHDRLSGATASIDAPEERPILDALERRGWQLTHILTTHHHGDHVAANASLKERFGLTIIGPKNEASKIPGIDRTVGHGDRFDFAGHPVDVIETPGHTSGHVCYHLPEDKLLFAADTLFALGCGRLFEGTADTMWQSLSRLMALPDDTAIYFGHEYTLANAHFAITVDPENSALKERAAEIEETRSDGGFTAPTTMGLEKRTNPFLRAGDPKIRALLGMEKASDAAVFAEIRKRKDNF.

Residues H57, H59, D61, H62, H115, D134, and H172 each contribute to the Zn(2+) site.

The protein belongs to the metallo-beta-lactamase superfamily. Glyoxalase II family. Monomer. Zn(2+) serves as cofactor.

It catalyses the reaction an S-(2-hydroxyacyl)glutathione + H2O = a 2-hydroxy carboxylate + glutathione + H(+). It functions in the pathway secondary metabolite metabolism; methylglyoxal degradation; (R)-lactate from methylglyoxal: step 2/2. Thiolesterase that catalyzes the hydrolysis of S-D-lactoyl-glutathione to form glutathione and D-lactic acid. This chain is Hydroxyacylglutathione hydrolase, found in Rhizobium meliloti (strain 1021) (Ensifer meliloti).